The chain runs to 573 residues: Proline--tRNA ligase (573 aa).

The protein belongs to the class-II aminoacyl-tRNA synthetase family. ProS type 1 subfamily. Homodimer.

Its subcellular location is the cytoplasm. It carries out the reaction tRNA(Pro) + L-proline + ATP = L-prolyl-tRNA(Pro) + AMP + diphosphate. Its function is as follows. Catalyzes the attachment of proline to tRNA(Pro) in a two-step reaction: proline is first activated by ATP to form Pro-AMP and then transferred to the acceptor end of tRNA(Pro). As ProRS can inadvertently accommodate and process non-cognate amino acids such as alanine and cysteine, to avoid such errors it has two additional distinct editing activities against alanine. One activity is designated as 'pretransfer' editing and involves the tRNA(Pro)-independent hydrolysis of activated Ala-AMP. The other activity is designated 'posttransfer' editing and involves deacylation of mischarged Ala-tRNA(Pro). The misacylated Cys-tRNA(Pro) is not edited by ProRS. The protein is Proline--tRNA ligase of Chromohalobacter salexigens (strain ATCC BAA-138 / DSM 3043 / CIP 106854 / NCIMB 13768 / 1H11).